The sequence spans 113 residues: Histone H2B (113 aa).

The interval 1–21 (MPATPAKRAKRVQQEKRHHKK) is disordered. A compositionally biased stretch (basic residues) spans 7 to 21 (KRAKRVQQEKRHHKK). Lys109 is covalently cross-linked (Glycyl lysine isopeptide (Lys-Gly) (interchain with G-Cter in ubiquitin)).

It belongs to the histone H2B family. In terms of assembly, the nucleosome is a histone octamer containing two molecules each of H2A, H2B, H3 and H4 assembled in one H3-H4 heterotetramer and two H2A-H2B heterodimers. The octamer wraps approximately 147 bp of DNA. In terms of processing, monoubiquitination of Lys-109 gives a specific tag for epigenetic transcriptional activation and is also prerequisite for histone H3 'Lys-4' and 'Lys-79' methylation.

Its subcellular location is the nucleus. It is found in the chromosome. In terms of biological role, core component of nucleosome. Nucleosomes wrap and compact DNA into chromatin, limiting DNA accessibility to the cellular machineries which require DNA as a template. Histones thereby play a central role in transcription regulation, DNA repair, DNA replication and chromosomal stability. DNA accessibility is regulated via a complex set of post-translational modifications of histones, also called histone code, and nucleosome remodeling. This chain is Histone H2B (H2B1), found in Euplotes crassus.